A 684-amino-acid polypeptide reads, in one-letter code: Fermitin family homolog 2 (684 aa).

Positions H40 to K81 are interaction with membranes containing phosphatidylinositol phosphate. The disordered stretch occupies residues L141–E163. Residues D279–F577 enclose the FERM domain. Positions K378–K474 constitute a PH domain. Residue K381 participates in a 1,2-diacyl-sn-glycero-3-phospho-(1D-myo-inositol-3,4,5-trisphosphate) binding.

Belongs to the kindlin family.

Its subcellular location is the cytoplasm. The protein localises to the cell cortex. It is found in the cytoskeleton. It localises to the stress fiber. The protein resides in the cell junction. Its subcellular location is the focal adhesion. The protein localises to the membrane. It is found in the cell projection. It localises to the lamellipodium membrane. The protein resides in the nucleus. Its subcellular location is the myofibril. The protein localises to the sarcomere. It is found in the i band. It localises to the cell surface. In terms of biological role, scaffolding protein that enhances integrin activation mediated by TLN1 and/or TLN2, but activates integrins only weakly by itself. Binds to membranes enriched in phosphoinositides. Enhances integrin-mediated cell adhesion onto the extracellular matrix and cell spreading; this requires both its ability to interact with integrins and with phospholipid membranes. Required for the assembly of focal adhesions. Participates in the connection between extracellular matrix adhesion sites and the actin cytoskeleton and also in the orchestration of actin assembly and cell shape modulation. Plays a role in the TGFB1 and integrin signaling pathways. Stabilizes active CTNNB1 and plays a role in the regulation of transcription mediated by CTNNB1 and TCF7L2/TCF4 and in Wnt signaling. Required for normal embryonic development, including normal heart morphogenesis and normal angiogenesis. This Danio rerio (Zebrafish) protein is Fermitin family homolog 2 (fermt2).